The primary structure comprises 138 residues: Large ribosomal subunit protein uL16 (138 aa).

Residues 1-13 show a composition bias toward basic residues; it reads MLQPSRRKYRKEQ. Positions 1–20 are disordered; sequence MLQPSRRKYRKEQKGRNTGL.

The protein belongs to the universal ribosomal protein uL16 family. As to quaternary structure, part of the 50S ribosomal subunit.

Functionally, binds 23S rRNA and is also seen to make contacts with the A and possibly P site tRNAs. This Bordetella avium (strain 197N) protein is Large ribosomal subunit protein uL16.